A 2300-amino-acid polypeptide reads, in one-letter code: Adenylate cyclase (2300 aa).

Composition is skewed to polar residues over residues 1 to 21 (MTRN…SSIT) and 28 to 41 (TPTS…TRPL). 3 disordered regions span residues 1–256 (MTRN…GSFL), 272–593 (GIRP…DLTR), and 631–652 (TKLF…MDED). Composition is skewed to low complexity over residues 42–61 (SPSL…VSRS) and 92–152 (SSQS…QVSP). Over residues 153 to 169 (TGGSRLTQSPTTPSNAS) the composition is skewed to polar residues. A compositionally biased stretch (basic and acidic residues) spans 170 to 185 (IREHRMSELGGYRREM). The span at 204–221 (QQQPQQPQQQQQQQQQQQ) shows a compositional bias: low complexity. The span at 228-237 (VSGTFSNLSQ) shows a compositional bias: polar residues. Residues 303 to 313 (SIASITTTASS) show a composition bias toward low complexity. Residues 333-344 (GDRDDWPGRDSS) show a composition bias toward basic and acidic residues. Polar residues predominate over residues 345 to 357 (EISLPQPSHSGPM). Pro residues predominate over residues 410 to 421 (PSRPRTPVPAPE). The span at 455–469 (DSSQNPPKTSSSARS) shows a compositional bias: polar residues. Basic and acidic residues predominate over residues 484-501 (KSNEDPRALKPSLSREDS). A compositionally biased stretch (polar residues) spans 511–550 (NGSSSMMGTRSRAQSPAPSWTGTSRGLKANSISDGTSSPA). Residues 552 to 565 (SHKKGILGRFRRHN) show a composition bias toward basic residues. The segment covering 631-643 (TKLFTSKKSSSAK) has biased composition (low complexity). Residues 749-841 (SNYYIRVFRS…IDEIGREDNS (93 aa)) enclose the Ras-associating domain. LRR repeat units follow at residues 867–890 (NQKL…LYRK), 892–914 (AEIV…FIQA), 915–938 (CTAL…FATA), 939–961 (SKLT…ELSK), 962–986 (LTGL…GAYK), 988–1008 (LRTL…ICEL), 1009–1031 (ETIV…LMKL), 1033–1055 (NLEK…VRDL), 1056–1079 (VSLR…DLPR), 1081–1097 (EILS…SGSF), 1098–1119 (ERLR…KAPV), 1120–1142 (PTLK…IDNL), 1143–1165 (MNLE…IGNL), 1166–1188 (KKLD…IGCL), 1189–1211 (TELR…IWWA), and 1213–1234 (KLEH…ASRA). Residues 1228 to 1336 (PKPASRAPQA…VITPSNGPRK (109 aa)) form a disordered region. Polar residues predominate over residues 1253 to 1263 (ANKNGLLSRTP). A compositionally biased stretch (low complexity) spans 1313-1327 (TSVVSRSTTQSSTGV). LRR repeat units follow at residues 1349–1369 (SGSL…VFEE), 1373–1396 (LPEL…TIRS), 1398–1420 (PQLV…DFLE), 1422–1445 (HCLL…ISRA), 1447–1469 (KLQV…PYDW), and 1474–1497 (NRDL…YRQP). Residues 1552–1828 (PYGMADTLGK…NKLLIMMIGV (277 aa)) form the PPM-type phosphatase domain. The disordered stretch occupies residues 1847–1867 (FSMPQDDPSHVPPSGNKRRKV). The Guanylate cyclase domain occupies 1892-2029 (SIVFTDIKNS…PMVNKASRIS (138 aa)). Residues Asp1897 and Asp1940 each coordinate Mg(2+). The disordered stretch occupies residues 2272 to 2300 (LDQAETDDATDNNSSGDVDTLDGSDTEQE). Acidic residues predominate over residues 2290 to 2300 (DTLDGSDTEQE).

This sequence belongs to the adenylyl cyclase class-4/guanylyl cyclase family. It depends on Mg(2+) as a cofactor.

The catalysed reaction is ATP = 3',5'-cyclic AMP + diphosphate. In terms of biological role, plays essential roles in regulation of cellular metabolism by catalyzing the synthesis of a second messenger, cAMP. The protein is Adenylate cyclase (cr-1) of Neurospora crassa (strain ATCC 24698 / 74-OR23-1A / CBS 708.71 / DSM 1257 / FGSC 987).